Reading from the N-terminus, the 317-residue chain is Large ribosomal subunit protein uL10z (317 aa).

It belongs to the universal ribosomal protein uL10 family. As to quaternary structure, P0 forms a pentameric complex by interaction with dimers of P1 and P2. Post-translationally, phosphorylated.

Its function is as follows. Ribosomal protein P0 is the functional equivalent of E.coli protein L10. The protein is Large ribosomal subunit protein uL10z (RPP0A) of Arabidopsis thaliana (Mouse-ear cress).